Here is a 460-residue protein sequence, read N- to C-terminus: GTPase Der (460 aa).

EngA-type G domains follow at residues 4–174 and 184–361; these read PQVA…PRRE and PKIA…AERS. GTP is bound by residues 10–17, 57–61, 126–129, 190–197, 237–241, and 302–305; these read GRPNVGKS, DTGGL, NKAE, DTAGI, and NKWD. The KH-like domain maps to 362 to 446; that stretch reads RRIPTAELNQ…PIELVFRERE (85 aa).

This sequence belongs to the TRAFAC class TrmE-Era-EngA-EngB-Septin-like GTPase superfamily. EngA (Der) GTPase family. In terms of assembly, associates with the 50S ribosomal subunit.

In terms of biological role, GTPase that plays an essential role in the late steps of ribosome biogenesis. This is GTPase Der from Thermomicrobium roseum (strain ATCC 27502 / DSM 5159 / P-2).